The primary structure comprises 262 residues: Putative hydro-lyase ROP_32680 (262 aa).

Belongs to the D-glutamate cyclase family.

This Rhodococcus opacus (strain B4) protein is Putative hydro-lyase ROP_32680.